A 159-amino-acid chain; its full sequence is NADH-quinone oxidoreductase subunit B (159 aa).

Positions 37, 38, 102, and 132 each coordinate [4Fe-4S] cluster.

This sequence belongs to the complex I 20 kDa subunit family. As to quaternary structure, NDH-1 is composed of 14 different subunits. Subunits NuoB, C, D, E, F, and G constitute the peripheral sector of the complex. [4Fe-4S] cluster serves as cofactor.

The protein resides in the cell inner membrane. The enzyme catalyses a quinone + NADH + 5 H(+)(in) = a quinol + NAD(+) + 4 H(+)(out). Its function is as follows. NDH-1 shuttles electrons from NADH, via FMN and iron-sulfur (Fe-S) centers, to quinones in the respiratory chain. Couples the redox reaction to proton translocation (for every two electrons transferred, four hydrogen ions are translocated across the cytoplasmic membrane), and thus conserves the redox energy in a proton gradient. This chain is NADH-quinone oxidoreductase subunit B, found in Ruthia magnifica subsp. Calyptogena magnifica.